Reading from the N-terminus, the 68-residue chain is Peptide Hp1090 (68 aa).

The N-terminal stretch at 1–23 is a signal peptide; the sequence is MKTQFAIFLITLVLFQMFSQSDA. The residue at position 36 (Phe-36) is a Phenylalanine amide. A propeptide spanning residues 40-68 is cleaved from the precursor; it reads GLSDLDDLDESFDGEVSQADIDFLKELMQ.

This sequence belongs to the non-disulfide-bridged peptide (NDBP) superfamily. Short antimicrobial peptide (group 4) family. In terms of tissue distribution, expressed by the venom gland.

The protein resides in the secreted. It localises to the target cell membrane. Its function is as follows. Amphipathic peptide which inhibits the growth of Gram-positive bacteria. This is Peptide Hp1090 from Heterometrus petersii (Asian forest scorpion).